A 94-amino-acid chain; its full sequence is Large ribosomal subunit protein bL27 (94 aa).

A propeptide spanning residues 1–9 (MLKLNLQFF) is cleaved from the precursor.

The protein belongs to the bacterial ribosomal protein bL27 family. The N-terminus is cleaved by ribosomal processing cysteine protease Prp.

The sequence is that of Large ribosomal subunit protein bL27 from Staphylococcus aureus (strain Mu3 / ATCC 700698).